Here is a 132-residue protein sequence, read N- to C-terminus: Protein LEKR1 (132 aa).

Residues 37–116 (FKAMEEKVKA…KKQLSHLQDE (80 aa)) are a coiled coil.

The protein is Protein LEKR1 (LEKR1) of Homo sapiens (Human).